Consider the following 110-residue polypeptide: UPF0145 protein Blon_0093/BLIJ_0092 (110 aa).

The protein belongs to the UPF0145 family.

The sequence is that of UPF0145 protein Blon_0093/BLIJ_0092 from Bifidobacterium longum subsp. infantis (strain ATCC 15697 / DSM 20088 / JCM 1222 / NCTC 11817 / S12).